A 355-amino-acid chain; its full sequence is Peptide chain release factor 1 (355 aa).

Gln232 is subject to N5-methylglutamine.

The protein belongs to the prokaryotic/mitochondrial release factor family. Methylated by PrmC. Methylation increases the termination efficiency of RF1.

It localises to the cytoplasm. In terms of biological role, peptide chain release factor 1 directs the termination of translation in response to the peptide chain termination codons UAG and UAA. In Kineococcus radiotolerans (strain ATCC BAA-149 / DSM 14245 / SRS30216), this protein is Peptide chain release factor 1.